The following is a 302-amino-acid chain: Methionyl-tRNA formyltransferase (302 aa).

107–110 (SLLP) is a binding site for (6S)-5,6,7,8-tetrahydrofolate.

It belongs to the Fmt family.

The enzyme catalyses L-methionyl-tRNA(fMet) + (6R)-10-formyltetrahydrofolate = N-formyl-L-methionyl-tRNA(fMet) + (6S)-5,6,7,8-tetrahydrofolate + H(+). Functionally, attaches a formyl group to the free amino group of methionyl-tRNA(fMet). The formyl group appears to play a dual role in the initiator identity of N-formylmethionyl-tRNA by promoting its recognition by IF2 and preventing the misappropriation of this tRNA by the elongation apparatus. This chain is Methionyl-tRNA formyltransferase, found in Leifsonia xyli subsp. xyli (strain CTCB07).